We begin with the raw amino-acid sequence, 635 residues long: Sulfite reductase [ferredoxin], chloroplastic (635 aa).

The N-terminal 50 residues, 1-50, are a transit peptide targeting the chloroplast; that stretch reads MSGAIGGAEVHGFRGAAAQLPRSRVLGRPIRVAPPAAARPGGASAGSIRA. 2 disordered regions span residues 31-50 and 245-267; these read RVAP…SIRA and PEVT…PEPI. The span at 245–254 shows a compositional bias: basic and acidic residues; sequence PEVTKARNDN. The [4Fe-4S] cluster site is built by cysteine 494, cysteine 500, cysteine 540, and cysteine 544. Residue cysteine 544 coordinates siroheme.

The protein belongs to the nitrite and sulfite reductase 4Fe-4S domain family. Monomer. Interacts with ferredoxin. The cofactor is siroheme. [4Fe-4S] cluster is required as a cofactor. In terms of processing, phosphorylated; this phosphorylation reduces DNA-binding. Present in roots and leaves (at protein level). In leaves, sulfite reductase activity is detected in both bundle sheath and mesophyll cell types.

It localises to the plastid. Its subcellular location is the chloroplast stroma. It is found in the chloroplast nucleoid. The protein localises to the plastid stroma. The enzyme catalyses hydrogen sulfide + 6 oxidized [2Fe-2S]-[ferredoxin] + 3 H2O = sulfite + 6 reduced [2Fe-2S]-[ferredoxin] + 7 H(+). With respect to regulation, inhibited by the tryptophan-modifying reagent, N-bromosuccinimide (NBS), by the lysine-modifying reagent, N-acetylsuccinimide and by the arginine-modifying reagent, phenylglyoxal. Complex formation with ferredoxin prevents these inhibitions. Essential protein with sulfite reductase activity required in assimilatory sulfate reduction pathway during both primary and secondary metabolism and thus involved in development and growth. In terms of biological role, DNA-binding protein that binds to both double-stranded and single-stranded DNA without significant sequence specificity to reversibly repress the transcriptional activity of chloroplast nucleoids by promoting DNA compaction and possibly regulate DNA replication. The protein is Sulfite reductase [ferredoxin], chloroplastic (SIR) of Zea mays (Maize).